A 643-amino-acid chain; its full sequence is 1-deoxy-D-xylulose-5-phosphate synthase (643 aa).

Thiamine diphosphate-binding positions include histidine 79 and 120–122 (AHA). Aspartate 151 lines the Mg(2+) pocket. Thiamine diphosphate-binding positions include 152-153 (GS), asparagine 180, tyrosine 287, and glutamate 369. Mg(2+) is bound at residue asparagine 180.

This sequence belongs to the transketolase family. DXPS subfamily. In terms of assembly, homodimer. Mg(2+) serves as cofactor. Requires thiamine diphosphate as cofactor.

The catalysed reaction is D-glyceraldehyde 3-phosphate + pyruvate + H(+) = 1-deoxy-D-xylulose 5-phosphate + CO2. It functions in the pathway metabolic intermediate biosynthesis; 1-deoxy-D-xylulose 5-phosphate biosynthesis; 1-deoxy-D-xylulose 5-phosphate from D-glyceraldehyde 3-phosphate and pyruvate: step 1/1. Functionally, catalyzes the acyloin condensation reaction between C atoms 2 and 3 of pyruvate and glyceraldehyde 3-phosphate to yield 1-deoxy-D-xylulose-5-phosphate (DXP). This Maricaulis maris (strain MCS10) (Caulobacter maris) protein is 1-deoxy-D-xylulose-5-phosphate synthase.